We begin with the raw amino-acid sequence, 1158 residues long: Formin-C (1158 aa).

Disordered regions lie at residues 8 to 29, 417 to 523, and 990 to 1052; these read INGN…PSVS, PNTS…LSCL, and INNN…NNSQ. The region spanning 20-388 is the GBD/FH3 domain; that stretch reads QQPQQNPSVS…EYSQRKLEMI (369 aa). Residues 417-437 are compositionally biased toward polar residues; the sequence is PNTSDLFDSSTLEDTYDGNND. The span at 438–481 shows a compositional bias: low complexity; that stretch reads TNSCTSISTSSTPIHISQPTTLIVPSTTPNHPPQQSQQTPPLQL. Positions 479-515 form a coiled coil; the sequence is LQLQKEKEKEKEKEKEKEKEKEKEQQQQQQQSNKQST. Basic and acidic residues predominate over residues 482–503; sequence QKEKEKEKEKEKEKEKEKEKEQ. The region spanning 601 to 998 is the FH2 domain; it reads TKSPITPSKR…IINNNNNNNN (398 aa). In terms of domain architecture, DAD spans 1134 to 1158; it reads SDDPMAVIIEALKTGSPNDMVKRAF.

This sequence belongs to the formin homology family. Diaphanous subfamily. As to quaternary structure, interacts (via GBD/FH3 domain) with activated Rho-GTPases.

Its subcellular location is the cytoplasm. It is found in the cytosol. The protein localises to the cytoskeleton. Functionally, formins play an important role in the nucleation of actin and the formation of linear actin filaments. The protein is Formin-C (forC) of Dictyostelium discoideum (Social amoeba).